A 177-amino-acid polypeptide reads, in one-letter code: Putative peroxiredoxin (177 aa).

The Thioredoxin domain occupies 8-177; sequence TAKGNEIPDT…ASIDTILTKV (170 aa). Cysteine 64 functions as the Cysteine sulfenic acid (-SOH) intermediate in the catalytic mechanism. Residues 175–177 carry the Microbody targeting signal motif; sequence TKV.

This sequence belongs to the peroxiredoxin family. Prx5 subfamily. In terms of assembly, homodimer; disulfide-linked, upon oxidation.

The catalysed reaction is a hydroperoxide + [thioredoxin]-dithiol = an alcohol + [thioredoxin]-disulfide + H2O. Functionally, thiol-specific peroxidase that catalyzes the reduction of hydrogen peroxide and organic hydroperoxides to water and alcohols, respectively. Plays a role in cell protection against oxidative stress by detoxifying peroxides and as sensor of hydrogen peroxide-mediated signaling events. The sequence is that of Putative peroxiredoxin from Malassezia furfur (Pityriasis versicolor infection agent).